A 777-amino-acid chain; its full sequence is MTRKSSNRSRGRKARSGKSASSSKLQIWLGRIWSIGWKLALTLAAVLVFIGIYLDSMIKQRFEGQLFDLPTVVYARILTLEPGNGLSLQELRNELDVLNYRKVAQPRFPGEYASSSSRIELIRRPFEFADGPEPDRRVMLTFDGSGLNKIESLEQKRELGYLRLEPKLMGMLEKDSPEQRLFLRRDQFPEVLVDALLVTEDRDFYQHDGVSPLAIGRAMVVNLKAGRTVQGGSTLTQQLAKNIFLSSDRTLWRKLREAYMALIIDYRYSKDRILEAYLNEVYLGQSGADAIHGFGLASRLYFGQPLQELRIDQLALLVGMVKGPSYYNPMRYAERARERRDLVLKLMMEHDILTAPEYQQAVTRPLDVQKTAQIASRQPAYFQQVSIELKEKLGDKFKADSGLRVFTSLDPVSQSKLEQAIHDQIPQLAKTAGKDLEAAAIAVDRHSGEIRAMVGGKRTGYDGFNRVLNASRQIGSLVKPAVYLTALAHPDQYNLATTLEDKPLTLKGSEGSAWTPRNYDRQYRGEVPLYLALAQSLNVPTVALGMKLGIDQVSATLGKLGVNRDEIRPVPSMLLGSFSLTPYQVAQMYQTLTNSGKKAPLSALRSVLDLEGNVLYESLPRVSQAVDQQAAWLTTYAMKQGVQEGTGRYLNAQFSSAALAGKTGTTNDNRDSWFVGVDGREVTTIWLGRDDNQPTKLTGASGALRVYAQYLKYRIPEKLQLPWPEGITTFGFAKQTQGGLKLDCDNAFKLPIWDNQQQLKQQCENRPTEWIKKLFEW.

The Cytoplasmic segment spans residues 1-30; that stretch reads MTRKSSNRSRGRKARSGKSASSSKLQIWLG. The helical; Signal-anchor for type II membrane protein transmembrane segment at 31–52 threads the bilayer; it reads RIWSIGWKLALTLAAVLVFIGI. The Periplasmic portion of the chain corresponds to 53–777; that stretch reads YLDSMIKQRF…TEWIKKLFEW (725 aa). Residues 162–334 form a transglycosylase region; that stretch reads LRLEPKLMGM…SYYNPMRYAE (173 aa). Residue E200 is the Proton donor; for transglycosylase activity of the active site. Residues 415–709 are transpeptidase; the sequence is SKLEQAIHDQ…ASGALRVYAQ (295 aa). Residue S476 is the Acyl-ester intermediate; for transpeptidase activity of the active site.

This sequence in the N-terminal section; belongs to the glycosyltransferase 51 family. In the C-terminal section; belongs to the transpeptidase family.

Its subcellular location is the cell inner membrane. The catalysed reaction is [GlcNAc-(1-&gt;4)-Mur2Ac(oyl-L-Ala-gamma-D-Glu-L-Lys-D-Ala-D-Ala)](n)-di-trans,octa-cis-undecaprenyl diphosphate + beta-D-GlcNAc-(1-&gt;4)-Mur2Ac(oyl-L-Ala-gamma-D-Glu-L-Lys-D-Ala-D-Ala)-di-trans,octa-cis-undecaprenyl diphosphate = [GlcNAc-(1-&gt;4)-Mur2Ac(oyl-L-Ala-gamma-D-Glu-L-Lys-D-Ala-D-Ala)](n+1)-di-trans,octa-cis-undecaprenyl diphosphate + di-trans,octa-cis-undecaprenyl diphosphate + H(+). It catalyses the reaction Preferential cleavage: (Ac)2-L-Lys-D-Ala-|-D-Ala. Also transpeptidation of peptidyl-alanyl moieties that are N-acyl substituents of D-alanine.. The protein operates within cell wall biogenesis; peptidoglycan biosynthesis. Cell wall formation. Synthesis of cross-linked peptidoglycan from the lipid intermediates. The enzyme has a penicillin-insensitive transglycosylase N-terminal domain (formation of linear glycan strands) and a penicillin-sensitive transpeptidase C-terminal domain (cross-linking of the peptide subunits). The chain is Penicillin-binding protein 1B (mrcB) from Vibrio cholerae serotype O1 (strain ATCC 39315 / El Tor Inaba N16961).